The chain runs to 276 residues: Sulfur carrier protein FdhD (276 aa).

C120 acts as the Cysteine persulfide intermediate in catalysis.

This sequence belongs to the FdhD family.

Its subcellular location is the cytoplasm. Required for formate dehydrogenase (FDH) activity. Acts as a sulfur carrier protein that transfers sulfur from IscS to the molybdenum cofactor prior to its insertion into FDH. This chain is Sulfur carrier protein FdhD, found in Bordetella bronchiseptica (strain ATCC BAA-588 / NCTC 13252 / RB50) (Alcaligenes bronchisepticus).